Consider the following 395-residue polypeptide: RNA demethylase ALKBH5 (395 aa).

Disordered regions lie at residues 1-28 and 47-83; these read MAAA…AGSR and AAEP…EEEA. At Ala2 the chain carries N-acetylalanine. A Glycyl lysine isopeptide (Lys-Gly) (interchain with G-Cter in ubiquitin) cross-link involves residue Lys58. Over residues 60-83 the composition is skewed to basic and acidic residues; the sequence is KYQEDSDPERSDYEEHQLQKEEEA. Phosphoserine occurs at positions 65 and 70. Residues 68–117 are a coiled coil; it reads ERSDYEEHQLQKEEEARKVKSGIRQIRLFSQDECSKIEARIDEVVSRAEK. Phosphotyrosine is present on Tyr72. Lys87 participates in a covalent cross-link: Glycyl lysine isopeptide (Lys-Gly) (interchain with G-Cter in SUMO1). Position 88 is a phosphoserine (Ser88). N6-acetyllysine is present on Lys133. Tyr140 is an active-site residue. Residues Asn194, Tyr196, and His205 each contribute to the 2-oxoglutarate site. Cys231 and Cys268 are joined by a disulfide. An N6-acetyllysine modification is found at Lys236. Residues His267 and Arg278 each coordinate 2-oxoglutarate. A disordered region spans residues 294–395; the sequence is ETKSLSSSTL…PTRKVKMRRH (102 aa). Positions 296-306 are enriched in low complexity; that stretch reads KSLSSSTLPPS. A Glycyl lysine isopeptide (Lys-Gly) (interchain with G-Cter in SUMO1) cross-link involves residue Lys322. Ser326 is subject to Phosphoserine. A Glycyl lysine isopeptide (Lys-Gly) (interchain with G-Cter in SUMO2) cross-link involves residue Lys329. The span at 329 to 350 shows a compositional bias: basic and acidic residues; sequence KADPDAAHRPRILEMDKEENRR. At Arg360 the chain carries Omega-N-methylarginine. Ser362, Ser372, Ser375, and Ser385 each carry phosphoserine.

Belongs to the alkB family. In terms of assembly, monomer. Interacts with RBM33; promoting desumoylation by SENP1 and recruitment to N(6)-methyladenosine-containing mRNAs. Interacts (when acetylated by KAT8) with PSPC1; interaction facilitates recognition of N(6)-methyladenosine (m6A) mRNA. Fe(2+) serves as cofactor. Post-translationally, phosphorylated at Ser-88 and Ser-326 in response to reactive oxygen species (ROS), promoting sumoylation and inactivation. In terms of processing, acetylated by KAT8 at Lys-236, promoting interaction with PSPC1, thereby facilitating recognition of N(6)-methyladenosine (m6A) mRNA by ALKBH5. Deacetylated at Lys-236 by HDAC7. Sumoylated at Lys-87 and Lys-322 by PIAS4 following phosphorylation at Ser-88 and Ser-326 in response to reactive oxygen species (ROS), inhibiting the RNA demethylase activity. Desumoylated by SENP1; relieving RNA demethylase inhibition, leading to N(6)-methyladenosine-containing mRNAs demethylation. Post-translationally, ubiquitinated at Lys-58 via 'Lys-48'-linked polyubiquitin chain, leading to its degradation by the proteasome. Deubiquitinated at Lys-58 by USP9X, promoting its stabilizazion. In terms of tissue distribution, widely expressed, with highest expression in testis. In testis, present in almost all testicular cell types except elongating and elongated spermatids (at protein level). Among spermatogenic cells, present at high level in spermatocytes; medium levels in spermatogonia and lower levels in round spermatids (at protein level).

The protein resides in the nucleus speckle. It carries out the reaction an N(6)-methyladenosine in mRNA + 2-oxoglutarate + O2 = an adenosine in mRNA + formaldehyde + succinate + CO2. RNA demethylase activity is inhibited following sumoylation. Inhibition is relieved following desumoylation. Inhibited by histone demethylase inhibitor IOX1. Functionally, dioxygenase that specifically demethylates N(6)-methyladenosine (m6A) RNA, the most prevalent internal modification of messenger RNA (mRNA) in higher eukaryotes. Demethylates RNA by oxidative demethylation, which requires molecular oxygen, alpha-ketoglutarate and iron. Demethylation of m6A mRNA affects mRNA processing, translation and export. Can also demethylate N(6)-methyladenosine in single-stranded DNA (in vitro). Required for the late meiotic and haploid phases of spermatogenesis by mediating m6A demethylation in spermatocytes and round spermatids: m6A demethylation of target transcripts is required for correct splicing and the production of longer 3'-UTR mRNAs in male germ cells. Involved in paraspeckle assembly, a nuclear membraneless organelle, by undergoing liquid-liquid phase separation. Paraspeckle assembly is coupled with m6A demethylation of RNAs, such as NEAT1 non-coding RNA. Also acts as a negative regulator of T-cell development: inhibits gamma-delta T-cell proliferation via demethylation of JAG1 and NOTCH2 transcripts. Inhibits regulatory T-cell (Treg) recruitment by mediating demethylation and destabilization of CCL28 mRNAs. The chain is RNA demethylase ALKBH5 from Mus musculus (Mouse).